The primary structure comprises 78 residues: MSSIEERVKKIVVEQLGVEEDQVTADASFIDDLGADSLDTVELVMALEEEFDCEIPDEEAEKISTLAQATSYVEANLD.

The Carrier domain occupies 2–77; the sequence is SSIEERVKKI…QATSYVEANL (76 aa). Residue serine 37 is modified to O-(pantetheine 4'-phosphoryl)serine.

It belongs to the acyl carrier protein (ACP) family. Post-translationally, 4'-phosphopantetheine is transferred from CoA to a specific serine of apo-ACP by AcpS. This modification is essential for activity because fatty acids are bound in thioester linkage to the sulfhydryl of the prosthetic group.

It is found in the cytoplasm. Its pathway is lipid metabolism; fatty acid biosynthesis. Its function is as follows. Carrier of the growing fatty acid chain in fatty acid biosynthesis. The chain is Acyl carrier protein from Hydrogenovibrio crunogenus (strain DSM 25203 / XCL-2) (Thiomicrospira crunogena).